A 132-amino-acid chain; its full sequence is MAPKAEKKPASKAPAEKKPAAKKTSSSVDPSKKRTKARKETYSSYIYKVLKQTHPDTGISQKSMSILNSFVNDIFERIATESSKLAAYNKKSTISAREIQTAVRLILPGELAKHAVSEGTRAVTKYSSSTQA.

The span at 1–19 (MAPKAEKKPASKAPAEKKP) shows a compositional bias: basic and acidic residues. A disordered region spans residues 1–39 (MAPKAEKKPASKAPAEKKPAAKKTSSSVDPSKKRTKARK). N6-acetyllysine; alternate occurs at positions 7 and 8. Residues lysine 7 and lysine 8 each participate in a glycyl lysine isopeptide (Lys-Gly) (interchain with G-Cter in SUMO); alternate cross-link. Residue serine 11 is modified to Phosphoserine. Lysine 12 carries the N6-acetyllysine modification. N6-acetyllysine; alternate is present on lysine 17. Residue lysine 17 forms a Glycyl lysine isopeptide (Lys-Gly) (interchain with G-Cter in SUMO); alternate linkage. A Glycyl lysine isopeptide (Lys-Gly) (interchain with G-Cter in SUMO) cross-link involves residue lysine 18. A Glycyl lysine isopeptide (Lys-Gly) (interchain with G-Cter in ubiquitin) cross-link involves residue lysine 125.

Belongs to the histone H2B family. The nucleosome is a histone octamer containing two molecules each of H2A, H2B, H3 and H4 assembled in one H3-H4 heterotetramer and two H2A-H2B heterodimers. The octamer wraps approximately 147 bp of DNA. Post-translationally, monoubiquitinated by the UBC2-BRE1 complex to form H2BK123ub1. H2BK123ub1 gives a specific tag for epigenetic transcriptional activation and is also prerequisite for H3K4me and H3K79me formation. H2BK123ub1 also modulates the formation of double-strand breaks during meiosis and is a prerequisite for DNA-damage checkpoint activation. In terms of processing, phosphorylated by STE20 to form H2BS10ph during progression through meiotic prophase. May be correlated with chromosome condensation. Acetylated by GCN5 to form H2BK11ac and H2BK16ac. H2BK16ac can also be formed by ESA1. Acetylation of N-terminal lysines and particularly formation of H2BK11acK16ac has a positive effect on transcription. Post-translationally, sumoylation to form H2BK6su or H2BK7su, and probably also H2BK16su or H2BK17su, occurs preferentially near the telomeres and represses gene transcription.

It is found in the nucleus. It localises to the chromosome. Core component of nucleosome. Nucleosomes wrap and compact DNA into chromatin, limiting DNA accessibility to the cellular machineries which require DNA as a template. Histones thereby play a central role in transcription regulation, DNA repair, DNA replication and chromosomal stability. DNA accessibility is regulated via a complex set of post-translational modifications of histones, also called histone code, and nucleosome remodeling. The sequence is that of Histone H2B.2 (HTB1) from Kluyveromyces lactis (strain ATCC 8585 / CBS 2359 / DSM 70799 / NBRC 1267 / NRRL Y-1140 / WM37) (Yeast).